Consider the following 412-residue polypeptide: Phosphoglycerate kinase (412 aa).

Substrate contacts are provided by residues 24–26 (DLN), R47, 70–73 (HLGR), R130, and R167. ATP contacts are provided by residues K217, G312, E343, and 369 to 372 (GGDS).

It belongs to the phosphoglycerate kinase family. In terms of assembly, monomer.

The protein resides in the cytoplasm. The enzyme catalyses (2R)-3-phosphoglycerate + ATP = (2R)-3-phospho-glyceroyl phosphate + ADP. The protein operates within carbohydrate degradation; glycolysis; pyruvate from D-glyceraldehyde 3-phosphate: step 2/5. This is Phosphoglycerate kinase from Kineococcus radiotolerans (strain ATCC BAA-149 / DSM 14245 / SRS30216).